We begin with the raw amino-acid sequence, 535 residues long: MRGSGAKIAGVLPLFMLFIAGTISAFEDIERLRIWPLPAQVSHGGRRMYLSGDFKLVTEGSKYGDASGILKEGFDRMLGVVRLSHVISGDRNSSGTGGSALLQGLHVIISSSTDELEYGADESYKLVVPSPEKPSYAQLEAKSVYGALHGLQTFSQLCHFNLKKKVIEILMTPWNIIDQPRFSYRGLLIDTSRHYLPLPVIKNVIDSMTYAKLNVLHWHIVDTQSFPLEIPSYPKLWNGAYSSSQRYTFEDAAEIVNYARRRGIHVLAEIDVPGHALSWGKGYPALWPSKNCQEPLDVSSDFTFKVIDGILSDFSKIFKFKFVHLGGDEVNTTCWSATPRIAQWLKKHRMSEKEAYQYFVLRAQKIALSHGYEIINWEETFINFGSKLNRKTVVHNWLNTGLVENVTASGLRCIVSNQEFWYLDHIDAPWQGFYANEPFQNITDKKQQSLVLGGEVCMWGEHIDASDIEQTIWPRAAAAAERLWTPYAKLAKNPNNVTTRLAHFRCLLNQRGVAAAPLVGGGRVVPFEPGSCLAQ.

The N-terminal stretch at 1–24 (MRGSGAKIAGVLPLFMLFIAGTIS) is a signal peptide. Asn92 is a glycosylation site (N-linked (GlcNAc...) asparagine). Residues Cys292 and Cys334 are joined by a disulfide bond. Glu329 (proton donor) is an active-site residue. N-linked (GlcNAc...) asparagine glycans are attached at residues Asn331, Asn405, Asn441, and Asn496. A disulfide bond links Cys506 and Cys532.

Belongs to the glycosyl hydrolase 20 family. N-glycosylated. Expressed in roots, leaves, stems, flowers and siliques.

It localises to the cell membrane. The enzyme catalyses Hydrolysis of terminal non-reducing N-acetyl-D-hexosamine residues in N-acetyl-beta-D-hexosaminides.. With respect to regulation, slightly inhibited by N-acetylcastanospermine. Its function is as follows. Has a broad substrate specificity. Can use synthetic substrates such as pyridylaminated chitotriose, p-nitrophenyl-beta-N-acetylglucosaminide, p-nitrophenyl-2-acetamido-2-deoxy-beta-D-glucopyranoside (pNP-GlcNAc), p-nitrophenyl-2-acetamido-2-deoxy-beta-D-galactopyranoside (pNP-GalNAc), 4-methylumbelliferyl-2-acetamido-2-deoxy-beta-D-glucopyranoside (MU-GlcNAc), and 4-methylumbelliferyl-6-sulfo-2-acetamido-2-deoxy-beta-D-glucopyranoside (MU-GlcNAc-6SO(4)) as substrates. Removes terminal GlcNAc residues from alpha1,3- and alpha1,6-mannosyl branches of biantennary N-glycans without any strict branch preference. Required for the presence of paucimannosidic N-glycans in glycoproteins of roots and leaves. This chain is Beta-hexosaminidase 3 (HEXO3), found in Arabidopsis thaliana (Mouse-ear cress).